The following is a 142-amino-acid chain: Large ribosomal subunit protein uL11 (142 aa).

It belongs to the universal ribosomal protein uL11 family. Part of the ribosomal stalk of the 50S ribosomal subunit. Interacts with L10 and the large rRNA to form the base of the stalk. L10 forms an elongated spine to which L12 dimers bind in a sequential fashion forming a multimeric L10(L12)X complex. Post-translationally, one or more lysine residues are methylated.

Forms part of the ribosomal stalk which helps the ribosome interact with GTP-bound translation factors. The polypeptide is Large ribosomal subunit protein uL11 (Buchnera aphidicola subsp. Acyrthosiphon pisum (strain APS) (Acyrthosiphon pisum symbiotic bacterium)).